A 192-amino-acid chain; its full sequence is Ion-translocating oxidoreductase complex subunit A (192 aa).

A run of 6 helical transmembrane segments spans residues 5–25 (VLLL…FLGL), 39–59 (IGMG…AYLV), 67–87 (LGIE…VVQF), 102–122 (LLGI…VALL), 134–154 (IIYG…FASM), and 171–191 (SIAM…TGLV).

This sequence belongs to the NqrDE/RnfAE family. As to quaternary structure, the complex is composed of six subunits: RnfA, RnfB, RnfC, RnfD, RnfE and RnfG.

The protein localises to the cell inner membrane. Its function is as follows. Part of a membrane-bound complex that couples electron transfer with translocation of ions across the membrane. The sequence is that of Ion-translocating oxidoreductase complex subunit A from Vibrio parahaemolyticus serotype O3:K6 (strain RIMD 2210633).